Here is a 531-residue protein sequence, read N- to C-terminus: Dimethylnonatriene synthase (531 aa).

A helical membrane pass occupies residues T6–A26. C464 provides a ligand contact to heme.

This sequence belongs to the cytochrome P450 family. Heme is required as a cofactor.

The protein localises to the membrane. It catalyses the reaction (6E,10E)-geranyllinalool + reduced [NADPH--hemoprotein reductase] + O2 = (3E,7E)-4,8,12-trimethyltrideca 1,3,7,11-tetraene + but-3-en-2-one + oxidized [NADPH--hemoprotein reductase] + 2 H2O + H(+). The enzyme catalyses (3S,6E)-nerolidol + reduced [NADPH--hemoprotein reductase] + O2 = (3E)-4,8-dimethylnona-1,3,7-triene + but-3-en-2-one + oxidized [NADPH--hemoprotein reductase] + 2 H2O + H(+). It participates in secondary metabolite biosynthesis; terpenoid biosynthesis. Involved in the biosynthesis of homoterpenes, attractants of herbivores parasitoids and predators (e.g. predatory mites and parasitoid wasps). Component of the volatile terpenes biosynthesis pathways. Converts mainly nerolidol to dimethylnonatriene (DMNT) and, to a lower extent, geranyllinalool to trimethyltridecatetraene (TMTT). The polypeptide is Dimethylnonatriene synthase (Zea mays (Maize)).